The sequence spans 259 residues: MYTKNFSNSRMEVKGNNGCSAPIIRKPFKHIVLTVPSSDLDNFNTVFYVQPQYINQALHLANAFQGAIDPLNLNFNFEKALQIANGIPNSAIVKTLNQSVIQQTVEISVMVEQLKKIIQEVLGLVINSTSFWNSVEATIKGTFTNLDTQIDEAWIFWHSLSAHNTSYYYNILFSIQNEDTGAVMAVLPLAFEVSVDVEKQKVLFFTIKDSARYEVKMKALTLVQALHSSNAPIVDIFNVNNYNLYHSNHKIIQNLNLSN.

It belongs to the cyt1/cyt2 endotoxin family. Homodimer (protoxin) and monomer (active toxin). Post-translationally, active after proteolytic processing.

In terms of biological role, kills the larvae of dipteran insects by making pores in the epithelial cell membrane of the insect midgut. The chain is Type-2Aa cytolytic delta-endotoxin (cyt2Aa1) from Bacillus thuringiensis subsp. kyushuensis.